Consider the following 358-residue polypeptide: UDP-N-acetylglucosamine--N-acetylmuramyl-(pentapeptide) pyrophosphoryl-undecaprenol N-acetylglucosamine transferase (358 aa).

UDP-N-acetyl-alpha-D-glucosamine is bound by residues 11–13 (TGG), Arg163, Ser191, Ile245, and Gln290.

Belongs to the glycosyltransferase 28 family. MurG subfamily.

The protein resides in the cell inner membrane. The catalysed reaction is di-trans,octa-cis-undecaprenyl diphospho-N-acetyl-alpha-D-muramoyl-L-alanyl-D-glutamyl-meso-2,6-diaminopimeloyl-D-alanyl-D-alanine + UDP-N-acetyl-alpha-D-glucosamine = di-trans,octa-cis-undecaprenyl diphospho-[N-acetyl-alpha-D-glucosaminyl-(1-&gt;4)]-N-acetyl-alpha-D-muramoyl-L-alanyl-D-glutamyl-meso-2,6-diaminopimeloyl-D-alanyl-D-alanine + UDP + H(+). It functions in the pathway cell wall biogenesis; peptidoglycan biosynthesis. Its function is as follows. Cell wall formation. Catalyzes the transfer of a GlcNAc subunit on undecaprenyl-pyrophosphoryl-MurNAc-pentapeptide (lipid intermediate I) to form undecaprenyl-pyrophosphoryl-MurNAc-(pentapeptide)GlcNAc (lipid intermediate II). The sequence is that of UDP-N-acetylglucosamine--N-acetylmuramyl-(pentapeptide) pyrophosphoryl-undecaprenol N-acetylglucosamine transferase from Janthinobacterium sp. (strain Marseille) (Minibacterium massiliensis).